Consider the following 98-residue polypeptide: NADH-ubiquinone oxidoreductase chain 4L (98 aa).

3 helical membrane-spanning segments follow: residues 1-21, 29-49, and 61-81; these read MSLV…GLLM, ALLC…LTIL, and IILL…LIMI.

The protein belongs to the complex I subunit 4L family. Core subunit of respiratory chain NADH dehydrogenase (Complex I) which is composed of 45 different subunits.

It localises to the mitochondrion inner membrane. It carries out the reaction a ubiquinone + NADH + 5 H(+)(in) = a ubiquinol + NAD(+) + 4 H(+)(out). Its function is as follows. Core subunit of the mitochondrial membrane respiratory chain NADH dehydrogenase (Complex I) which catalyzes electron transfer from NADH through the respiratory chain, using ubiquinone as an electron acceptor. Part of the enzyme membrane arm which is embedded in the lipid bilayer and involved in proton translocation. This is NADH-ubiquinone oxidoreductase chain 4L (MT-ND4L) from Monodon monoceros (Narwhal).